The sequence spans 171 residues: Disulfide bond formation protein B (171 aa).

The Cytoplasmic segment spans residues 1-10; it reads MQRLLTYRAL. A helical membrane pass occupies residues 11–27; sequence NFILFIASVVAMLFAII. Topologically, residues 28–46 are periplasmic; it reads FLQNYKGLEPCPLCIFQRI. A disulfide bridge links cysteine 38 with cysteine 41. A helical membrane pass occupies residues 47–63; that stretch reads GLMVMGGFSLIAAVGHP. Over 64 to 70 the chain is Cytoplasmic; the sequence is KKMGMQL. The chain crosses the membrane as a helical span at residues 71-88; it reads LLWIGSMAGILWSAGVAA. Residues 89–145 are Periplasmic-facing; the sequence is RHVWIQHLPADQVPACGPGLDYFLEALPMKQVINQVLSGSGECAEISWRFLGLSIPE. Residues cysteine 104 and cysteine 131 are joined by a disulfide bond. A helical transmembrane segment spans residues 146-164; the sequence is QALILFTALILVNLLVLWR. Residues 165–171 are Cytoplasmic-facing; sequence IISKRTA.

Belongs to the DsbB family.

It is found in the cell inner membrane. In terms of biological role, required for disulfide bond formation in some periplasmic proteins. Acts by oxidizing the DsbA protein. This Psychrobacter sp. (strain PRwf-1) protein is Disulfide bond formation protein B.